Reading from the N-terminus, the 75-residue chain is Putative membrane protein insertion efficiency factor (75 aa).

The protein belongs to the UPF0161 family.

The protein localises to the cell membrane. Its function is as follows. Could be involved in insertion of integral membrane proteins into the membrane. This Bacillus velezensis (strain DSM 23117 / BGSC 10A6 / LMG 26770 / FZB42) (Bacillus amyloliquefaciens subsp. plantarum) protein is Putative membrane protein insertion efficiency factor.